Consider the following 444-residue polypeptide: Glycine receptor subunit alphaZ1 (444 aa).

The signal sequence occupies residues 1-24 (MFALGIYLWETIVFFSLAASQQAA). Over 25 to 246 (ARKAASPMPP…RFHLERQMGY (222 aa)) the chain is Extracellular. Asparagine 62 is a glycosylation site (N-linked (GlcNAc...) asparagine). Residues arginine 89 and serine 153 each contribute to the glycine site. A disulfide bond links cysteine 162 and cysteine 176. Zn(2+) is bound by residues glutamate 216 and aspartate 218. A disulfide bridge links cysteine 222 with cysteine 233. Residue 226–231 (YNTGKF) coordinates strychnine. Threonine 228 lines the glycine pocket. Residue histidine 239 participates in Zn(2+) binding. The chain crosses the membrane as a helical span at residues 247 to 268 (YLIQMYIPSLLIVILSWVSFWI). The Cytoplasmic portion of the chain corresponds to 269–273 (NMDAA). The helical transmembrane segment at 274–294 (PARVGLGITTVLTMTTQSSGS) threads the bilayer. At 295 to 305 (RASLPKVSYVK) the chain is on the extracellular side. A helical membrane pass occupies residues 306 to 326 (AIDIWMAVCLLFVFSALLEYA). Residues 327–412 (AVNFIARQHK…FISRAKRIDT (86 aa)) are Cytoplasmic-facing. The chain crosses the membrane as a helical span at residues 413–433 (VSRVAFPLVFLIFNIFYWITY). Over 434–444 (KIIRSEDIHKQ) the chain is Extracellular.

This sequence belongs to the ligand-gated ion channel (TC 1.A.9) family. Glycine receptor (TC 1.A.9.3) subfamily. GLRA1 sub-subfamily. As to quaternary structure, homopentamer (in vitro). Heteropentamer composed of glra1 and glrb. Both homopentamers and heteropentamers form functional ion channels. Interacts with glrb. As to expression, expressed in brain.

It localises to the postsynaptic cell membrane. The protein resides in the synapse. Its subcellular location is the perikaryon. The protein localises to the cell projection. It is found in the dendrite. It localises to the cell membrane. It catalyses the reaction chloride(in) = chloride(out). Activated by glycine and taurine. Inhibited by strychnine. Allosterically activated by ivermectin. Inhibited by picrotoxinin. Strychnine binding locks the channel in a closed conformation and prevents channel opening in response to extracellular glycine. Can also be activated by GABA and inhibited by bicuculline, but this requires heterologous expression in human cells. Its function is as follows. Subunit of heteromeric glycine-gated chloride channels. Plays an important role in the down-regulation of neuronal excitability. Contributes to the generation of inhibitory postsynaptic currents. Channel activity is potentiated by ethanol. The chain is Glycine receptor subunit alphaZ1 (glra1) from Danio rerio (Zebrafish).